The primary structure comprises 867 residues: Putative ribosome biogenesis ATPase nvl (867 aa).

Positions 70–203 (LSSCESSENE…NNNNGNNKDN (134 aa)) are disordered. Positions 110-122 (EQLTSQYKQNIKN) are enriched in polar residues. 3 stretches are compositionally biased toward low complexity: residues 123 to 132 (TPPTTTTTTP), 141 to 172 (IPSNVNSNNNNNNNNNAINSNTTTNNVNTPNS), and 180 to 203 (NSSNGNNVFQFSNNNNNNGNNKDN). 257–264 (GPSGCGKT) contributes to the ATP binding site. The tract at residues 351 to 370 (SSNNSTNEPNEQTEQQQQQQ) is disordered. ATP is bound at residue 607 to 614 (GPPGCGKT). Positions 834–843 (DINKSRDKKP) are enriched in basic and acidic residues. Residues 834-855 (DINKSRDKKPNNSNNIPITNNI) are disordered. A compositionally biased stretch (low complexity) spans 844–855 (NNSNNIPITNNI).

The protein belongs to the AAA ATPase family.

It is found in the nucleus. The protein localises to the nucleolus. Its subcellular location is the nucleoplasm. Its function is as follows. Involved in ribosome biogenesis. This Dictyostelium discoideum (Social amoeba) protein is Putative ribosome biogenesis ATPase nvl (nvl).